The sequence spans 65 residues: Conotoxin TsMRCL-04 (65 aa).

The N-terminal stretch at 1–20 is a signal peptide; that stretch reads MRCLPVFIILLLLIPSAASA. The propeptide occupies 21–48; the sequence is AQPETKDDAALASFYDNAKRTLQRHWAK. Glu63 carries the post-translational modification Glutamic acid 1-amide.

It belongs to the conotoxin T superfamily. Post-translationally, contains 2 disulfide bonds that can be either 'C1-C3, C2-C4' or 'C1-C4, C2-C3', since these disulfide connectivities have been observed for conotoxins with cysteine framework V (for examples, see AC P0DQQ7 and AC P81755). In terms of tissue distribution, expressed by the venom duct.

Its subcellular location is the secreted. The protein is Conotoxin TsMRCL-04 of Conus tessulatus (Tessellate cone).